The primary structure comprises 545 residues: CTP synthase (545 aa).

Residues 1-266 (MATNYIFVTG…DDFVCERFRL (266 aa)) are amidoligase domain. Residue serine 14 coordinates CTP. Serine 14 provides a ligand contact to UTP. ATP contacts are provided by residues 15–20 (SLGKGI) and aspartate 72. Aspartate 72 and glutamate 140 together coordinate Mg(2+). Residues 147-149 (DIE), 187-192 (KTKPTQ), and lysine 223 each bind CTP. Residues 187–192 (KTKPTQ) and lysine 223 contribute to the UTP site. 239–241 (KDV) is an ATP binding site. The Glutamine amidotransferase type-1 domain maps to 291-542 (TIGMVGKYTE…VKAAYENHKK (252 aa)). Glycine 352 is a binding site for L-glutamine. The active-site Nucleophile; for glutamine hydrolysis is cysteine 379. Residues 380–383 (LGMQ), glutamate 403, and arginine 470 contribute to the L-glutamine site. Residues histidine 515 and glutamate 517 contribute to the active site.

This sequence belongs to the CTP synthase family. Homotetramer.

It catalyses the reaction UTP + L-glutamine + ATP + H2O = CTP + L-glutamate + ADP + phosphate + 2 H(+). The catalysed reaction is L-glutamine + H2O = L-glutamate + NH4(+). It carries out the reaction UTP + NH4(+) + ATP = CTP + ADP + phosphate + 2 H(+). It functions in the pathway pyrimidine metabolism; CTP biosynthesis via de novo pathway; CTP from UDP: step 2/2. With respect to regulation, allosterically activated by GTP, when glutamine is the substrate; GTP has no effect on the reaction when ammonia is the substrate. The allosteric effector GTP functions by stabilizing the protein conformation that binds the tetrahedral intermediate(s) formed during glutamine hydrolysis. Inhibited by the product CTP, via allosteric rather than competitive inhibition. Catalyzes the ATP-dependent amination of UTP to CTP with either L-glutamine or ammonia as the source of nitrogen. Regulates intracellular CTP levels through interactions with the four ribonucleotide triphosphates. In Haemophilus influenzae (strain ATCC 51907 / DSM 11121 / KW20 / Rd), this protein is CTP synthase.